The primary structure comprises 283 residues: MKIKFTKMHGAGNDFVVIDAINQSIHFTPAQWQHLADRRFGVGADQMLVVEKPQAAGVDFRYRIYNADGGEVEQCGNGARAFVKFVTDKKLTDKQAIRVETMSGVIEPRLEANGQITVDMGAPILTPEDVPFDVSGLLCKAEGADTLWPLDIKGETHWISVLSMGNPHAVQVVADADHAPVREDGVLIEHHPRFPKRVNAGFMQIIDPHQIKLRVFERGAGETLACGTGACAAVVSGIRRGLLASPIKVQTRGGELSIAWAGDNSPVLLTGPAVTVFEGEIEL.

3 residues coordinate substrate: Asn-13, Gln-46, and Asn-66. The active-site Proton donor is Cys-75. Substrate contacts are provided by residues 76–77 (GN), Asn-166, Asn-199, and 217–218 (ER). Cys-226 serves as the catalytic Proton acceptor. 227–228 (GT) contacts substrate.

It belongs to the diaminopimelate epimerase family. Homodimer.

The protein resides in the cytoplasm. It carries out the reaction (2S,6S)-2,6-diaminopimelate = meso-2,6-diaminopimelate. It participates in amino-acid biosynthesis; L-lysine biosynthesis via DAP pathway; DL-2,6-diaminopimelate from LL-2,6-diaminopimelate: step 1/1. Functionally, catalyzes the stereoinversion of LL-2,6-diaminopimelate (L,L-DAP) to meso-diaminopimelate (meso-DAP), a precursor of L-lysine and an essential component of the bacterial peptidoglycan. The chain is Diaminopimelate epimerase from Herminiimonas arsenicoxydans.